A 637-amino-acid chain; its full sequence is Nuclear receptor-binding protein homolog (637 aa).

A compositionally biased stretch (polar residues) spans 1 to 14 (MSNSQANAGISGST). Disordered stretches follow at residues 1–60 (MSNS…TADA) and 74–99 (SEGVNLDSSPRESGDDSEDESEILEE). The segment covering 36–46 (PAATPPSQSTQ) has biased composition (low complexity). Residues 88 to 98 (DDSEDESEILE) show a composition bias toward acidic residues. Positions 109-375 (REEVDQRDVP…ANDLLFHPLL (267 aa)) constitute a Protein kinase domain. 2 disordered regions span residues 465–489 (PNFRSRAASPERADSVKSATPEPVD) and 617–637 (PQEQQNADGDVDVEHSGTTSN). 3 positions are modified to phosphoserine: Ser-473, Ser-479, and Ser-482. Thr-484 carries the post-translational modification Phosphothreonine.

It belongs to the protein kinase superfamily. Ser/Thr protein kinase family.

Its subcellular location is the cytoplasm. It localises to the cell cortex. In terms of biological role, may play a role in subcellular trafficking between the endoplasmic reticulum and Golgi apparatus. This chain is Nuclear receptor-binding protein homolog, found in Drosophila melanogaster (Fruit fly).